We begin with the raw amino-acid sequence, 192 residues long: dTTP/UTP pyrophosphatase (192 aa).

Aspartate 68 (proton acceptor) is an active-site residue.

The protein belongs to the Maf family. YhdE subfamily. It depends on a divalent metal cation as a cofactor.

It is found in the cytoplasm. The catalysed reaction is dTTP + H2O = dTMP + diphosphate + H(+). It catalyses the reaction UTP + H2O = UMP + diphosphate + H(+). Nucleoside triphosphate pyrophosphatase that hydrolyzes dTTP and UTP. May have a dual role in cell division arrest and in preventing the incorporation of modified nucleotides into cellular nucleic acids. This is dTTP/UTP pyrophosphatase from Cereibacter sphaeroides (strain ATCC 17023 / DSM 158 / JCM 6121 / CCUG 31486 / LMG 2827 / NBRC 12203 / NCIMB 8253 / ATH 2.4.1.) (Rhodobacter sphaeroides).